We begin with the raw amino-acid sequence, 510 residues long: Propionyl-CoA carboxylase beta chain (510 aa).

The CoA carboxyltransferase N-terminal domain occupies methionine 1 to proline 257. Residues methionine 1–lysine 504 are carboxyltransferase. A CoA carboxyltransferase C-terminal domain is found at aspartate 261–lysine 504. The segment at aspartate 292–glutamine 325 is acyl-CoA binding.

Belongs to the AccD/PCCB family. The holoenzyme is a dodecamer composed of 6 PccA/alpha subunits and 6 PccB/beta subunits.

It carries out the reaction propanoyl-CoA + hydrogencarbonate + ATP = (S)-methylmalonyl-CoA + ADP + phosphate + H(+). Its pathway is metabolic intermediate metabolism; propanoyl-CoA degradation; succinyl-CoA from propanoyl-CoA: step 1/3. This is one of the 2 subunits of the biotin-dependent propionyl-CoA carboxylase (PCC), the enzyme catalyzing the carboxylation of propionyl-CoA/propanoyl-CoA to D-methylmalonyl-CoA/(S)-methylmalonyl-CoA. Within the holoenzyme, the alpha subunit catalyzes the ATP-dependent carboxylation of the biotin carried by the biotin carboxyl carrier (BCC) domain, while the beta subunit then tranfers the carboxyl group from carboxylated biotin to propionyl-CoA. The chain is Propionyl-CoA carboxylase beta chain from Roseobacter denitrificans (strain ATCC 33942 / OCh 114) (Erythrobacter sp. (strain OCh 114)).